Here is a 343-residue protein sequence, read N- to C-terminus: Anthranilate phosphoribosyltransferase (343 aa).

Residues Gly79, 82-83 (GD), Thr87, 89-92 (NVST), 106-114 (KHGNRAASS), and Ser118 each bind 5-phospho-alpha-D-ribose 1-diphosphate. Residue Gly79 coordinates anthranilate. A Mg(2+)-binding site is contributed by Ser91. An anthranilate-binding site is contributed by Asn109. Arg164 contributes to the anthranilate binding site. Mg(2+) contacts are provided by Asp223 and Glu224.

Belongs to the anthranilate phosphoribosyltransferase family. As to quaternary structure, homodimer. Mg(2+) is required as a cofactor.

The enzyme catalyses N-(5-phospho-beta-D-ribosyl)anthranilate + diphosphate = 5-phospho-alpha-D-ribose 1-diphosphate + anthranilate. Its pathway is amino-acid biosynthesis; L-tryptophan biosynthesis; L-tryptophan from chorismate: step 2/5. Catalyzes the transfer of the phosphoribosyl group of 5-phosphorylribose-1-pyrophosphate (PRPP) to anthranilate to yield N-(5'-phosphoribosyl)-anthranilate (PRA). The polypeptide is Anthranilate phosphoribosyltransferase (Metallosphaera sedula (strain ATCC 51363 / DSM 5348 / JCM 9185 / NBRC 15509 / TH2)).